The sequence spans 855 residues: Protein translocase subunit SecA (855 aa).

ATP-binding positions include Gln-85, 103-107 (GEGKT), and Asp-492. Residues 794 to 845 (AAIHEESSSAAAPGPGQNQPGGPGGPSAGPVAPVRNLDKHGRNELCPCGSGK) form a disordered region. Over residues 801 to 811 (SSAAAPGPGQN) the composition is skewed to low complexity. Zn(2+) contacts are provided by Cys-839, Cys-841, Cys-850, and Cys-851.

Belongs to the SecA family. As to quaternary structure, monomer and homodimer. Part of the essential Sec protein translocation apparatus which comprises SecA, SecYEG and auxiliary proteins SecDF. Other proteins may also be involved. The cofactor is Zn(2+).

It localises to the cell membrane. It is found in the cytoplasm. It catalyses the reaction ATP + H2O + cellular proteinSide 1 = ADP + phosphate + cellular proteinSide 2.. Its function is as follows. Part of the Sec protein translocase complex. Interacts with the SecYEG preprotein conducting channel. Has a central role in coupling the hydrolysis of ATP to the transfer of proteins into and across the cell membrane, serving as an ATP-driven molecular motor driving the stepwise translocation of polypeptide chains across the membrane. This Clostridium beijerinckii (strain ATCC 51743 / NCIMB 8052) (Clostridium acetobutylicum) protein is Protein translocase subunit SecA.